Consider the following 426-residue polypeptide: Probable inactive metalloprotease YmfF (426 aa).

Zn(2+)-binding residues include His50 and Glu138.

This sequence belongs to the peptidase M16 family.

The protein is Probable inactive metalloprotease YmfF (ymfF) of Bacillus subtilis (strain 168).